The following is a 424-amino-acid chain: UPF0229 protein ECA2349 (424 aa).

The interval 53-111 (SIPNADINEPMFHQGRGGHRHRVHPGNDHFVQNDKIERPQGGGGSGSGQGDASKDGEGD) is disordered. The span at 77–90 (PGNDHFVQNDKIER) shows a compositional bias: basic and acidic residues. Gly residues predominate over residues 92–101 (QGGGGSGSGQ).

Belongs to the UPF0229 family.

In Pectobacterium atrosepticum (strain SCRI 1043 / ATCC BAA-672) (Erwinia carotovora subsp. atroseptica), this protein is UPF0229 protein ECA2349.